A 297-amino-acid chain; its full sequence is ClpXP adapter protein SpxH (297 aa).

It belongs to the SpxH family. Interacts with Spx.

It localises to the cytoplasm. Functionally, adapter protein required for efficient degradation of Spx by ClpXP under non-stress conditions. Interaction with Spx stabilizes Spx and exposes the C-terminus of Spx for recognition and proteolysis by ClpXP. In Bacillus cereus (strain ZK / E33L), this protein is ClpXP adapter protein SpxH.